The sequence spans 117 residues: Large ribosomal subunit protein bL19 (117 aa).

This sequence belongs to the bacterial ribosomal protein bL19 family.

Functionally, this protein is located at the 30S-50S ribosomal subunit interface and may play a role in the structure and function of the aminoacyl-tRNA binding site. The chain is Large ribosomal subunit protein bL19 from Exiguobacterium sibiricum (strain DSM 17290 / CCUG 55495 / CIP 109462 / JCM 13490 / 255-15).